A 106-amino-acid polypeptide reads, in one-letter code: Large ribosomal subunit protein eL42 (106 aa).

The protein belongs to the eukaryotic ribosomal protein eL42 family.

The protein is Large ribosomal subunit protein eL42 (RPL44) of Meyerozyma guilliermondii (strain ATCC 6260 / CBS 566 / DSM 6381 / JCM 1539 / NBRC 10279 / NRRL Y-324) (Yeast).